We begin with the raw amino-acid sequence, 404 residues long: Exodeoxyribonuclease 7 large subunit (404 aa).

It belongs to the XseA family. As to quaternary structure, heterooligomer composed of large and small subunits.

Its subcellular location is the cytoplasm. It catalyses the reaction Exonucleolytic cleavage in either 5'- to 3'- or 3'- to 5'-direction to yield nucleoside 5'-phosphates.. In terms of biological role, bidirectionally degrades single-stranded DNA into large acid-insoluble oligonucleotides, which are then degraded further into small acid-soluble oligonucleotides. This chain is Exodeoxyribonuclease 7 large subunit, found in Mesoplasma florum (strain ATCC 33453 / NBRC 100688 / NCTC 11704 / L1) (Acholeplasma florum).